The following is a 260-amino-acid chain: Ribosomal RNA small subunit methyltransferase G (260 aa).

S-adenosyl-L-methionine contacts are provided by residues glycine 94, phenylalanine 99, 117–119 (DST), 145–146 (AE), and arginine 164. The tract at residues 236–260 (APTPPPYPRSPGTPKRQPLGQSNRP) is disordered. Pro residues predominate over residues 237 to 246 (PTPPPYPRSP).

It belongs to the methyltransferase superfamily. RNA methyltransferase RsmG family.

Its subcellular location is the cytoplasm. Functionally, specifically methylates the N7 position of a guanine in 16S rRNA. The polypeptide is Ribosomal RNA small subunit methyltransferase G (Synechococcus sp. (strain JA-2-3B'a(2-13)) (Cyanobacteria bacterium Yellowstone B-Prime)).